The sequence spans 333 residues: Holliday junction branch migration complex subunit RuvB (333 aa).

The tract at residues 1–182 (MEERIVSAEA…FGVMARLEYY (182 aa)) is large ATPase domain (RuvB-L). ATP-binding positions include Leu21, Arg22, Gly63, Lys66, Thr67, Thr68, 129–131 (EDF), Arg172, Tyr182, and Arg219. Position 67 (Thr67) interacts with Mg(2+). The interval 183 to 253 (KPEELAQIVE…RACSALEQLH (71 aa)) is small ATPAse domain (RuvB-S). Residues 256-333 (PLGLDHIDDK…AHYGVEKQNG (78 aa)) are head domain (RuvB-H). DNA contacts are provided by Arg311 and Arg316.

The protein belongs to the RuvB family. Homohexamer. Forms an RuvA(8)-RuvB(12)-Holliday junction (HJ) complex. HJ DNA is sandwiched between 2 RuvA tetramers; dsDNA enters through RuvA and exits via RuvB. An RuvB hexamer assembles on each DNA strand where it exits the tetramer. Each RuvB hexamer is contacted by two RuvA subunits (via domain III) on 2 adjacent RuvB subunits; this complex drives branch migration. In the full resolvosome a probable DNA-RuvA(4)-RuvB(12)-RuvC(2) complex forms which resolves the HJ.

The protein resides in the cytoplasm. It catalyses the reaction ATP + H2O = ADP + phosphate + H(+). The RuvA-RuvB-RuvC complex processes Holliday junction (HJ) DNA during genetic recombination and DNA repair, while the RuvA-RuvB complex plays an important role in the rescue of blocked DNA replication forks via replication fork reversal (RFR). RuvA specifically binds to HJ cruciform DNA, conferring on it an open structure. The RuvB hexamer acts as an ATP-dependent pump, pulling dsDNA into and through the RuvAB complex. RuvB forms 2 homohexamers on either side of HJ DNA bound by 1 or 2 RuvA tetramers; 4 subunits per hexamer contact DNA at a time. Coordinated motions by a converter formed by DNA-disengaged RuvB subunits stimulates ATP hydrolysis and nucleotide exchange. Immobilization of the converter enables RuvB to convert the ATP-contained energy into a lever motion, pulling 2 nucleotides of DNA out of the RuvA tetramer per ATP hydrolyzed, thus driving DNA branch migration. The RuvB motors rotate together with the DNA substrate, which together with the progressing nucleotide cycle form the mechanistic basis for DNA recombination by continuous HJ branch migration. Branch migration allows RuvC to scan DNA until it finds its consensus sequence, where it cleaves and resolves cruciform DNA. This is Holliday junction branch migration complex subunit RuvB from Shouchella clausii (strain KSM-K16) (Alkalihalobacillus clausii).